The chain runs to 127 residues: Protein ApaG (127 aa).

Positions 3–127 constitute an ApaG domain; sequence DQPPTEIQIS…FRLAAATVFH (125 aa).

The sequence is that of Protein ApaG from Acidithiobacillus ferrooxidans (strain ATCC 23270 / DSM 14882 / CIP 104768 / NCIMB 8455) (Ferrobacillus ferrooxidans (strain ATCC 23270)).